The sequence spans 329 residues: MQEIMAKLEQLENLNDLERLRVEVMGKKGILTQQFALLKNLEGETKKTFAKELNKNKENFEKMLESKRESLLKVQMNENLTKEVVDASLFTALRPKSNGHPIYQTMDRIIDFFVNMNFAIQTGPLVEDDFHNFEALNLPVFHPARDMQDTFYFKDSMLLRTHTSPVQIRTMQSQHIPIRMIAPGSVFRRDYDLTHSPMFHQVEGLVVDEKDKISFVHLKYILEDFLHYMFGDVRIRFRSSFFPFTEPSAEVDISCVFCGGSGCRVCSHTGWLEVLGCGIVNQKVFDAVGHKNVSGYAFGLGVERFAMLLHRVNDLRSFFETDLRVLEQF.

Glutamate 246 lines the Mg(2+) pocket.

Belongs to the class-II aminoacyl-tRNA synthetase family. Phe-tRNA synthetase alpha subunit type 1 subfamily. Tetramer of two alpha and two beta subunits. Mg(2+) serves as cofactor.

The protein localises to the cytoplasm. The enzyme catalyses tRNA(Phe) + L-phenylalanine + ATP = L-phenylalanyl-tRNA(Phe) + AMP + diphosphate + H(+). The polypeptide is Phenylalanine--tRNA ligase alpha subunit (Helicobacter hepaticus (strain ATCC 51449 / 3B1)).